Reading from the N-terminus, the 86-residue chain is Exodeoxyribonuclease 7 small subunit (86 aa).

The disordered stretch occupies residues 1–26 (MQDELFETEKAPQKNAKNAKNAPKKS).

The protein belongs to the XseB family. As to quaternary structure, heterooligomer composed of large and small subunits.

The protein resides in the cytoplasm. It catalyses the reaction Exonucleolytic cleavage in either 5'- to 3'- or 3'- to 5'-direction to yield nucleoside 5'-phosphates.. Its function is as follows. Bidirectionally degrades single-stranded DNA into large acid-insoluble oligonucleotides, which are then degraded further into small acid-soluble oligonucleotides. This chain is Exodeoxyribonuclease 7 small subunit, found in Helicobacter pylori (strain J99 / ATCC 700824) (Campylobacter pylori J99).